Here is a 156-residue protein sequence, read N- to C-terminus: Ribosomal RNA large subunit methyltransferase H (156 aa).

Residues Leu73, Gly104, and 123–128 contribute to the S-adenosyl-L-methionine site; that span reads LSALTL.

The protein belongs to the RNA methyltransferase RlmH family. In terms of assembly, homodimer.

It is found in the cytoplasm. It carries out the reaction pseudouridine(1915) in 23S rRNA + S-adenosyl-L-methionine = N(3)-methylpseudouridine(1915) in 23S rRNA + S-adenosyl-L-homocysteine + H(+). Specifically methylates the pseudouridine at position 1915 (m3Psi1915) in 23S rRNA. The polypeptide is Ribosomal RNA large subunit methyltransferase H (Shewanella piezotolerans (strain WP3 / JCM 13877)).